Consider the following 429-residue polypeptide: Protein phosphatase 2C homolog 2 (429 aa).

Positions 16–291 (LYGLSAMQGW…DNMTMIIIGL (276 aa)) constitute a PPM-type phosphatase domain. Asp64, Gly65, Asp233, and Asp282 together coordinate Mn(2+). 2 disordered regions span residues 320–348 (YGKSEFRGPGIRNQFEETPDNYDLENDRS) and 384–429 (RDVT…SASS). Basic and acidic residues predominate over residues 384–397 (RDVTNHLQHDKAEE). A compositionally biased stretch (low complexity) spans 405–419 (SESPSSANKNSSGSG).

Belongs to the PP2C family. The cofactor is Mg(2+). Mn(2+) is required as a cofactor.

The protein localises to the cytoplasm. It localises to the nucleus. It carries out the reaction O-phospho-L-seryl-[protein] + H2O = L-seryl-[protein] + phosphate. The catalysed reaction is O-phospho-L-threonyl-[protein] + H2O = L-threonyl-[protein] + phosphate. Dephosphorylating regulator for many key proteins. Dephosphorylates sakA, to negatively regulate the stress-activated p38MAPK cascade. The chain is Protein phosphatase 2C homolog 2 from Aspergillus fumigatus (strain ATCC MYA-4609 / CBS 101355 / FGSC A1100 / Af293) (Neosartorya fumigata).